Consider the following 673-residue polypeptide: MAQACWGCYPWLVLICACAWGHPKSLNQREDVRNCSTSPPYLPVTAVNTTAQLTALREQMLTQNLSAYIIPDTDAHMSEYIGECDQRRAWITGFIGSAGIAVVTERKAALWTDSRYWTQAERQMDCNWELHKEVSTGHIVTWLLTEIPVGGRVGFDPFLFSIDSWESYDVALQDADRELVSITVNLVDLVWGSERPPLPNAPIYALQEAFAGSTWQEKVSNIRSQMQKHHERPTAVLLSALDETAWLFNLRSSDIPYNPFFYSYTLLTDSSIRLFANKSRFSSETLQYLNSSCNSSMCVQLEDYSQIRDSIQAYTSGDVKIWIGTRYTSYGLYEVIPKEKLVEDDYSPVMITKAVKNSREQALLKASHVRDAVAVIRYLAWLEKNVPTGTVDEFSGAKRVEEFRGEEEFFSGPSFETISASGLNAALAHYSPTKELHRKLSSDEMYLLDSGGQYWDGTTDITRTVHWGTPSAFQKEAYTRVLIGNIDLSRLVFPAATSGRVVEAFARKALWDVGLNYGHGTGHGIGNFLCVHEWPVGFQYGNIPMAEGMFTSIEPGYYQDGEFGIRLEDVALVVEAKTKYPGTYLTFEVVSLVPYDRKLIDVSLLSPEQLQYLNRYYQAIREKVGPELQRRGLLEELSWLQRHTEPLSARAAPTTSLGSLMTVSALAILGWSV.

The first 21 residues, 1–21 (MAQACWGCYPWLVLICACAWG), serve as a signal peptide directing secretion. 3 N-linked (GlcNAc...) asparagine glycosylation sites follow: Asn-34, Asn-48, and Asn-64. Residue Arg-115 participates in substrate binding. 3 N-linked (GlcNAc...) asparagine glycosylation sites follow: Asn-277, Asn-290, and Asn-294. His-429 serves as a coordination point for substrate. Residue Asp-449 coordinates Mn(2+). Positions 449, 460, and 523 each coordinate Zn(2+). Residues His-523, His-532, and Glu-554 each coordinate substrate. Residues Glu-554 and Glu-568 each coordinate Zn(2+). Ala-649 carries the GPI-anchor amidated alanine lipid modification. Positions 650–673 (RAAPTTSLGSLMTVSALAILGWSV) are cleaved as a propeptide — removed in mature form.

The protein belongs to the peptidase M24B family. As to quaternary structure, homotrimer. Zn(2+) serves as cofactor. N-glycosylated. As to expression, kidney.

Its subcellular location is the cell membrane. It carries out the reaction Release of any N-terminal amino acid, including proline, that is linked to proline, even from a dipeptide or tripeptide.. Its activity is regulated as follows. Inhibited by apstatin and the metal ion chelator EDTA. Potently inhibited by the converting enzyme inhibitors cilazaprilat; enalaprilat; L155,212; ramiprilat and YS 980. Also inhibited to a lesser extent by indolaprilat; quinaprilat; spiraprilat; captopril and zofenoprilat. Membrane-bound metalloprotease which catalyzes the removal of a penultimate prolyl residue from the N-termini of peptides, such as Arg-Pro-Pro. May play a role in the metabolism of the vasodilator bradykinin. This chain is Xaa-Pro aminopeptidase 2 (XPNPEP2), found in Sus scrofa (Pig).